A 336-amino-acid chain; its full sequence is Nicotinate-nucleotide--dimethylbenzimidazole phosphoribosyltransferase (336 aa).

The disordered stretch occupies residues 20–41; that stretch reads GPDAAARAGAEERNGQLTKPPG. Glu-304 acts as the Proton acceptor in catalysis.

It belongs to the CobT family.

It carries out the reaction 5,6-dimethylbenzimidazole + nicotinate beta-D-ribonucleotide = alpha-ribazole 5'-phosphate + nicotinate + H(+). It participates in nucleoside biosynthesis; alpha-ribazole biosynthesis; alpha-ribazole from 5,6-dimethylbenzimidazole: step 1/2. Its function is as follows. Catalyzes the synthesis of alpha-ribazole-5'-phosphate from nicotinate mononucleotide (NAMN) and 5,6-dimethylbenzimidazole (DMB). The chain is Nicotinate-nucleotide--dimethylbenzimidazole phosphoribosyltransferase from Ruegeria pomeroyi (strain ATCC 700808 / DSM 15171 / DSS-3) (Silicibacter pomeroyi).